Here is a 352-residue protein sequence, read N- to C-terminus: UDP-N-acetylglucosamine--N-acetylmuramyl-(pentapeptide) pyrophosphoryl-undecaprenol N-acetylglucosamine transferase 2 (352 aa).

UDP-N-acetyl-alpha-D-glucosamine is bound by residues S11–G13, R164, S194, and Q289.

The protein belongs to the glycosyltransferase 28 family. MurG subfamily.

The protein localises to the cell membrane. The enzyme catalyses di-trans,octa-cis-undecaprenyl diphospho-N-acetyl-alpha-D-muramoyl-L-alanyl-D-glutamyl-meso-2,6-diaminopimeloyl-D-alanyl-D-alanine + UDP-N-acetyl-alpha-D-glucosamine = di-trans,octa-cis-undecaprenyl diphospho-[N-acetyl-alpha-D-glucosaminyl-(1-&gt;4)]-N-acetyl-alpha-D-muramoyl-L-alanyl-D-glutamyl-meso-2,6-diaminopimeloyl-D-alanyl-D-alanine + UDP + H(+). It functions in the pathway cell wall biogenesis; peptidoglycan biosynthesis. Cell wall formation. Catalyzes the transfer of a GlcNAc subunit on undecaprenyl-pyrophosphoryl-MurNAc-pentapeptide (lipid intermediate I) to form undecaprenyl-pyrophosphoryl-MurNAc-(pentapeptide)GlcNAc (lipid intermediate II). This chain is UDP-N-acetylglucosamine--N-acetylmuramyl-(pentapeptide) pyrophosphoryl-undecaprenol N-acetylglucosamine transferase 2, found in Bacillus thuringiensis subsp. konkukian (strain 97-27).